Reading from the N-terminus, the 68-residue chain is Large ribosomal subunit protein bL33c (68 aa).

It belongs to the bacterial ribosomal protein bL33 family.

The protein localises to the plastid. It localises to the chloroplast. This Piper cenocladum (Ant piper) protein is Large ribosomal subunit protein bL33c.